A 290-amino-acid chain; its full sequence is Phosphatidylglycerol--prolipoprotein diacylglyceryl transferase (290 aa).

7 helical membrane passes run 21–41 (VSLHWYGLMYLVGFVFAMWLA), 60–80 (LLYAGFLGVFIGGRVGYVLFY), 96–116 (WDGGMSFHGGLIGVICVMLWF), 124–144 (FFQVADFIAPLIPFGLGAGRL), 199–219 (SQLYEMILEGVVLFIILNVFI), 226–246 (GSVSGLFLIGYGTFRIIVECF), and 260–280 (ISMGQILSVPMILAGIIMMIW). Arg-143 contributes to the a 1,2-diacyl-sn-glycero-3-phospho-(1'-sn-glycerol) binding site.

It belongs to the Lgt family.

It is found in the cell inner membrane. It carries out the reaction L-cysteinyl-[prolipoprotein] + a 1,2-diacyl-sn-glycero-3-phospho-(1'-sn-glycerol) = an S-1,2-diacyl-sn-glyceryl-L-cysteinyl-[prolipoprotein] + sn-glycerol 1-phosphate + H(+). Its pathway is protein modification; lipoprotein biosynthesis (diacylglyceryl transfer). Its function is as follows. Catalyzes the transfer of the diacylglyceryl group from phosphatidylglycerol to the sulfhydryl group of the N-terminal cysteine of a prolipoprotein, the first step in the formation of mature lipoproteins. The polypeptide is Phosphatidylglycerol--prolipoprotein diacylglyceryl transferase (Yersinia pseudotuberculosis serotype O:1b (strain IP 31758)).